A 271-amino-acid polypeptide reads, in one-letter code: 3'-phosphoadenosine 5'-phosphate phosphatase (271 aa).

The Mg(2+) site is built by glutamate 73, aspartate 91, leucine 93, aspartate 94, and aspartate 216. Glutamate 73 is a substrate binding site. Residues 93–96 (LDGT) and aspartate 216 each bind substrate.

The protein belongs to the inositol monophosphatase superfamily. As to quaternary structure, homodimer. Mg(2+) serves as cofactor.

It catalyses the reaction adenosine 3',5'-bisphosphate + H2O = AMP + phosphate. The enzyme catalyses beta-D-fructose 1,6-bisphosphate + H2O = beta-D-fructose 6-phosphate + phosphate. The catalysed reaction is a myo-inositol phosphate + H2O = myo-inositol + phosphate. It functions in the pathway sulfur metabolism; sulfate assimilation. Phosphatase with a broad specificity. Its primary physiological function is to dephosphorylate 3'-phosphoadenosine 5'-phosphate (PAP) and 3'-phosphoadenosine 5'-phosphosulfate (PAPS). Thus, plays a role in mycobacterial sulfur metabolism, since it can serve as a key regulator of the sulfate assimilation pathway by controlling the pools of PAP and PAPS in the cell. To a lesser extent, is also able to hydrolyze inositol 1-phosphate (I-1-P), fructose 1,6-bisphosphate (FBP) (to fructose 6-phosphate (F-6-P)) and AMP in vitro, but this might not be significant in vivo. This chain is 3'-phosphoadenosine 5'-phosphate phosphatase (cysQ), found in Mycobacterium leprae (strain TN).